Here is a 305-residue protein sequence, read N- to C-terminus: N-acyl-aromatic-L-amino acid amidohydrolase (carboxylate-forming) (305 aa).

Residues H15 and E18 each coordinate Zn(2+). Substrate is bound by residues R57 and 64 to 65; that span reads NR. H108 contacts Zn(2+). The substrate site is built by E171 and Y281.

It belongs to the AspA/AstE family. Aspartoacylase subfamily. As to quaternary structure, homotetramer. Zn(2+) serves as cofactor.

It is found in the apical cell membrane. The protein resides in the cytoplasm. The catalysed reaction is an N-acyl-aromatic L-alpha-amino acid + H2O = an aromatic L-alpha-amino acid + a carboxylate. It carries out the reaction an N-acetyl-L-cysteine-S-conjugate + H2O = an S-substituted L-cysteine + acetate. In terms of biological role, plays an important role in deacetylating mercapturic acids in kidney proximal tubules. The sequence is that of N-acyl-aromatic-L-amino acid amidohydrolase (carboxylate-forming) (acy3) from Xenopus laevis (African clawed frog).